An 82-amino-acid polypeptide reads, in one-letter code: Short neurotoxin OKI-10 (82 aa).

Residues 1–20 (KTLLLTLVVVTIVCLDLGYT) form the signal peptide. 4 disulfide bridges follow: Cys-23–Cys-44, Cys-37–Cys-61, Cys-63–Cys-74, and Cys-75–Cys-80.

The protein belongs to the three-finger toxin family. Short-chain subfamily. Type I alpha-neurotoxin sub-subfamily. In terms of tissue distribution, expressed by the venom gland.

The protein localises to the secreted. In terms of biological role, binds to muscle nicotinic acetylcholine receptor (nAChR) and inhibit acetylcholine from binding to the receptor, thereby impairing neuromuscular transmission. This Laticauda laticaudata (Blue-ringed sea krait) protein is Short neurotoxin OKI-10.